The chain runs to 491 residues: MESSAKRKMDPDNPDEGPSSKVPRPETPVTKATTFLQTMLRKEVNSQLSLGDPLFPELAEESLKTFEQVTEDCNENPEKDVLAELVKQIKVRVDMVRHRIKEHMLKKYTQTEEKFTGAFNMMGGCLQNALDILDKVHEPFEEMKCIGLTMQSMYENYIVPEDKREMWMACIKELHDVSKGAANKLGGALQAKARAKKDELRRKMMYMCYRNIEFFTKNSAFPKTTNGCSQAMAALQNLPQCSPDEIMAYAQKIFKILDEERDKVLTHIDHIFMDILTTCVETMCNEYKVTSDACMMTMYGGISLLSEFCRVLCCYVLEETSVMLAKRPLITKPEVISVMKRRIEEICMKVFAQYILGADPLRVCSPSVDDLRAIAEESDEEEAIVAYTLATAGVSSSDSLVSPPESPVPATIPLSSVIVAENSDQEESEQSDEEEEEGAQEEREDTVSVKSEPVSEIEEVAPEEEEDGAEEPTASGGKSTHPMVTRSKADQ.

The span at Met-1 to Pro-11 shows a compositional bias: basic and acidic residues. Residues Met-1 to Arg-24 are nuclear localization signal. The tract at residues Met-1–Thr-30 is disordered. An interaction with host PML, interference with PML sumoylation and disruption of PML-associated nuclear bodies region spans residues Ile-132–Ile-346. The segment at Ala-373–Asp-445 is interaction with host STAT2. The interval Ala-410–Ala-420 is modulation of STAT3/STAT1 signaling. Residues Ala-410–Asp-445 form an interaction with host STAT3 region. The acidic stretch occupies residues Glu-421 to Pro-472. A disordered region spans residues Glu-421–Gln-491. Residues Ser-423 to Glu-444 show a composition bias toward acidic residues. Residues Val-449–Glu-452 are interaction with host SUMO1. Lys-450 is covalently cross-linked (Glycyl lysine isopeptide (Lys-Gly) (interchain with G-Cter in SUMO)). The segment covering Ser-455–Glu-470 has biased composition (acidic residues). The segment at Ser-475–Gln-491 is chromosome-tethering domain (CTD), binding to histones.

This sequence belongs to the HHV-5 IE1 protein family. As to quaternary structure, forms homodimers. Interacts with human p53/TP53; this interaction inhibits p53/TP53-dependent transactivation activity. Interacts with host STAT1. Interacts with host STAT2; this interaction promotes viral growth and counteracts the antiviral interferon response. May also interact with the host STAT1-STAT2 heterodimer. Interacts with host STAT3; this interaction leads to STAT3 nuclear accumulation and disruption of IL6-induced STAT3 phosphorylation. Interacts with host PML; this interaction inhibits host PML de novo sumoylation and probably inhibits PML regulation of type I and type II interferon-induced gene expression. Interacts with host DAXX. Interacts with host SP100. Interacts with host E2F1. Interacts with host RB1. Interacts with host HDAC1; this interaction inhibits histone deacetylation and promotes viral transcription. Interacts with host HDAC2; this interaction inhibits histone deacetylation and promotes viral transcription. Interacts with host HDAC3; this interaction inhibits histone deacetylation and promotes viral transcription. Interacts with host PLSCR1; this interaction inhibits IE1 transactivating activity. Sumoylated by host PML. Sumoylation abolishes the interaction with host STAT2 and thus the IE1-mediated repression of interferon-stimulated genes.

The protein localises to the host nucleus. Plays an important role in transactivating viral early genes as well as activating its own promoter, probably by altering the viral chromatin structure. Expression of IE1 and IE2 proteins is critical for the establishment of lytic infection and reactivation from viral latency. Disrupts PML-associated ND10 nuclear bodies by interfering with host PML and SP100 sumoylation thereby altering the regulation of type I and type II interferon-induced gene expression. Promotes efficient viral growth by interacting with and directing host SP100 to degradation, leading to enhanced acetylation level of histones. In addition, functions in counteracting the host innate antiviral response. Inhibits the type I interferon pathway by directly interacting with and sequestrating host STAT2. Also targets type II interferon pathway by repressing IL6- and STAT3 target genes. Repression of STAT3 genes is due to STAT3 nuclear accumulation and disruption of IL6-induced STAT3 phosphorylation by IE1. This repression is followed by phosphorylation and activation of STAT1. Inhibits host ISG transcription by sequestering host ISGF3 in a PML- and STAT2- binding dependent manner. Alters host cell cycle progression, probably through its interaction with host E2F1 or RB1 that overcomes the RB1-mediated repression of E2F-responsive promoters. In Human cytomegalovirus (strain AD169) (HHV-5), this protein is Immediate early protein IE1 (UL123).